The sequence spans 851 residues: DEAD-box ATP-dependent RNA helicase 29 (851 aa).

A disordered region spans residues 1 to 49 (MARLNPSKPSSRGGKPRSSSADAMAEHKPPPGRPKREGEGASKKKAKSG). Residues 7-20 (SKPSSRGGKPRSSS) are compositionally biased toward low complexity. A compositionally biased stretch (basic and acidic residues) spans 24-42 (MAEHKPPPGRPKREGEGAS). The Q motif motif lies at 49-77 (GGFESMGLCEEVYRGVRHKGYRVPTPIQR). The Helicase ATP-binding domain maps to 80-253 (MPLILAGHDI…KAGLRDPQIV (174 aa)). An ATP-binding site is contributed by 93-100 (ARTGSGKT). Residues 201–204 (DEAD) carry the DEAD box motif. The Helicase C-terminal domain occupies 277 to 426 (KLAALLYLVR…PAPTEEELLK (150 aa)). The disordered stretch occupies residues 702–851 (KWQQKTHRSI…KGKMKGKGTR (150 aa)). Basic residues predominate over residues 733-746 (RGNRKHTAAGRGRR). Composition is skewed to basic and acidic residues over residues 773 to 787 (DIARMKNRSTKESKF) and 796 to 825 (RHDGPSKDGKFQKNRRPDGNGKNRRPDGNG). Residues 841–851 (GKGKMKGKGTR) are compositionally biased toward basic residues.

Belongs to the DEAD box helicase family. DDX54/DBP10 subfamily.

The catalysed reaction is ATP + H2O = ADP + phosphate + H(+). The polypeptide is DEAD-box ATP-dependent RNA helicase 29 (Oryza sativa subsp. indica (Rice)).